The chain runs to 684 residues: DNA helicase IV (684 aa).

The UvrD-like helicase ATP-binding domain maps to 195 to 505; that stretch reads SPLNPAQARA…CDLDTTYRFN (311 aa). ATP-binding positions include 216-223 and Arg-503; that span reads AGAGSGKT.

It belongs to the helicase family. UvrD subfamily.

It catalyses the reaction Couples ATP hydrolysis with the unwinding of duplex DNA by translocating in the 3'-5' direction.. The enzyme catalyses ATP + H2O = ADP + phosphate + H(+). In terms of biological role, helicase IV catalyzes the unwinding of duplex DNA in the 3' to 5' direction with respect to the bound single strand in a reaction that is dependent upon the hydrolysis of ATP. The sequence is that of DNA helicase IV (helD) from Escherichia coli (strain K12).